A 391-amino-acid polypeptide reads, in one-letter code: Phosphoglycerate kinase (391 aa).

Substrate-binding positions include 21–23 (DLN), R36, 59–62 (HLGR), R113, and R146. Residues K197, E319, and 345 to 348 (GGDT) contribute to the ATP site.

The protein belongs to the phosphoglycerate kinase family. As to quaternary structure, monomer.

It is found in the cytoplasm. The catalysed reaction is (2R)-3-phosphoglycerate + ATP = (2R)-3-phospho-glyceroyl phosphate + ADP. Its pathway is carbohydrate degradation; glycolysis; pyruvate from D-glyceraldehyde 3-phosphate: step 2/5. This is Phosphoglycerate kinase from Shewanella sediminis (strain HAW-EB3).